The chain runs to 308 residues: tRNA dimethylallyltransferase (308 aa).

Position 14–21 (14–21 (GPTASGKT)) interacts with ATP. Residue 16 to 21 (TASGKT) coordinates substrate. Interaction with substrate tRNA regions lie at residues 39-42 (DSAL), 163-167 (QRLSR), and 244-249 (RCVGYR).

This sequence belongs to the IPP transferase family. As to quaternary structure, monomer. Mg(2+) serves as cofactor.

It carries out the reaction adenosine(37) in tRNA + dimethylallyl diphosphate = N(6)-dimethylallyladenosine(37) in tRNA + diphosphate. Its function is as follows. Catalyzes the transfer of a dimethylallyl group onto the adenine at position 37 in tRNAs that read codons beginning with uridine, leading to the formation of N6-(dimethylallyl)adenosine (i(6)A). In Shewanella baltica (strain OS185), this protein is tRNA dimethylallyltransferase.